Consider the following 554-residue polypeptide: Glucose-6-phosphate isomerase 2 (554 aa).

The active-site Proton donor is the Glu-359. Residues His-390 and Lys-518 contribute to the active site.

This sequence belongs to the GPI family.

The protein localises to the cytoplasm. The enzyme catalyses alpha-D-glucose 6-phosphate = beta-D-fructose 6-phosphate. Its pathway is carbohydrate biosynthesis; gluconeogenesis. It functions in the pathway carbohydrate degradation; glycolysis; D-glyceraldehyde 3-phosphate and glycerone phosphate from D-glucose: step 2/4. In terms of biological role, catalyzes the reversible isomerization of glucose-6-phosphate to fructose-6-phosphate. This chain is Glucose-6-phosphate isomerase 2, found in Pseudomonas putida (strain ATCC 47054 / DSM 6125 / CFBP 8728 / NCIMB 11950 / KT2440).